Consider the following 86-residue polypeptide: Putative membrane protein insertion efficiency factor (86 aa).

The protein belongs to the UPF0161 family.

The protein resides in the cell inner membrane. In terms of biological role, could be involved in insertion of integral membrane proteins into the membrane. This chain is Putative membrane protein insertion efficiency factor, found in Oleidesulfovibrio alaskensis (strain ATCC BAA-1058 / DSM 17464 / G20) (Desulfovibrio alaskensis).